Consider the following 93-residue polypeptide: Alpha-defensin 2 (93 aa).

An N-terminal signal peptide occupies residues 1 to 19; sequence MKPLVLLSALVLLSFQVQA. Residues 20–58 constitute a propeptide that is removed on maturation; the sequence is DPIQNTDEETKTEEQSGEEDQAVSVSFGDREGASLQEES. Residues 23-49 are disordered; sequence QNTDEETKTEEQSGEEDQAVSVSFGDR. 3 disulfides stabilise this stretch: Cys64–Cys92, Cys66–Cys81, and Cys71–Cys91.

It belongs to the alpha-defensin family. As to expression, paneth cells of the small bowel.

It localises to the secreted. Functionally, has broad-spectrum antimicrobial properties. Has antibacterial activity against the Gram-positive bacterium L.monocytogenes EGD and the Gram-negative bacteria E.coli ML-35p and avirulent S.typhimurium 7953, but not against the mouse-virulent S.typhimurium 14028S. Probably contributes to the antimicrobial barrier function of the small bowel mucosa. This is Alpha-defensin 2 (Defa2) from Mus musculus (Mouse).